The following is a 532-amino-acid chain: uncharacterized protein (532 aa).

Transmembrane regions (helical) follow at residues 25–45 (ITKI…GDVG), 65–85 (SGFP…NHHT), 109–129 (AVPI…QVAA), 134–154 (LFPF…MLPS), 179–199 (KGAS…AGSL), 203–223 (IILG…RQNE), 248–268 (LLLF…SGGE), 302–322 (VPYI…EKIT), 344–364 (KPVN…QVFS), 371–391 (SLAV…FPAI), 392–412 (AVGA…PRYG), 425–445 (AAVA…DKLR), 459–479 (SAVL…TGRG), and 494–514 (AVFI…LNSV).

The protein belongs to the polysaccharide synthase family.

Its subcellular location is the cell membrane. This is an uncharacterized protein from Bacillus subtilis (strain 168).